We begin with the raw amino-acid sequence, 267 residues long: GRYTVQNQWGGSSAPWNDAGLWLLGSRANQNVMDVSVTSSDGGATLTGTMTYSGEGPIGFKGTRRGDSNNYDVENQWGGSSAPWHAGGTFVIGSRSGQGVVAVDVNSSDGGKTLTGTMTYANEGPIGFKGTQSGGDSYNVENQWGGSSAPWNKAGAWALGDRDGQGVIGVDVTSSDGGKTLTGTMQYQNEGPIGFKGTSTGGSNYKVENQWGGSSAPWNPAGNWLIGDRHNQNIVAVKVTSSDNGKTLGGTCTYEREGPIGFKGTAI.

4 consecutive repeat copies span residues 1-67, 68-135, 136-202, and 203-267. Residues 1-267 form a 4 X approximate tandem repeats region; that stretch reads GRYTVQNQWG…GPIGFKGTAI (267 aa).

Monomer.

In terms of biological role, lectin specific for high mannose N-glycans, recognizes the branched moiety of these glycans. Does not recognize other types of N-glycans or monosaccharides. The chain is Lectin SfL-1 from Solieria filiformis (Red alga).